Reading from the N-terminus, the 60-residue chain is UPF0434 protein Aave_2563 (60 aa).

This sequence belongs to the UPF0434 family.

The polypeptide is UPF0434 protein Aave_2563 (Paracidovorax citrulli (strain AAC00-1) (Acidovorax citrulli)).